A 248-amino-acid chain; its full sequence is MEKIVCIIPSRYSSSRFQGKPLADLCGKPMIQHVYERVLKSELVSYAAVATDDSRIFEAVRKFGGKAIMTAARHRSGTDRIAEAVNSLDLKDDDIVVNVQGDQPIFEPEQIAEVTRPLREDPSLPMATLIYRIVREEEITHPNAVKVVFDRNFNALYFSRATIPYVRDDRHPIAYYKHHGIYAYRRAFLRTFTALEEGTMERLESLEQLRALEFGYRIRVVETLHDSVEVDTPEELARVRDILLGRAR.

It belongs to the KdsB family.

It is found in the cytoplasm. It carries out the reaction 3-deoxy-alpha-D-manno-oct-2-ulosonate + CTP = CMP-3-deoxy-beta-D-manno-octulosonate + diphosphate. The protein operates within nucleotide-sugar biosynthesis; CMP-3-deoxy-D-manno-octulosonate biosynthesis; CMP-3-deoxy-D-manno-octulosonate from 3-deoxy-D-manno-octulosonate and CTP: step 1/1. It participates in bacterial outer membrane biogenesis; lipopolysaccharide biosynthesis. Activates KDO (a required 8-carbon sugar) for incorporation into bacterial lipopolysaccharide in Gram-negative bacteria. The polypeptide is 3-deoxy-manno-octulosonate cytidylyltransferase (Syntrophus aciditrophicus (strain SB)).